We begin with the raw amino-acid sequence, 82 residues long: Large ribosomal subunit protein bL31 (82 aa).

This sequence belongs to the bacterial ribosomal protein bL31 family. Type A subfamily. In terms of assembly, part of the 50S ribosomal subunit.

Its function is as follows. Binds the 23S rRNA. The chain is Large ribosomal subunit protein bL31 from Rippkaea orientalis (strain PCC 8801 / RF-1) (Cyanothece sp. (strain PCC 8801)).